We begin with the raw amino-acid sequence, 264 residues long: S-adenosylmethionine decarboxylase proenzyme (264 aa).

S112 (schiff-base intermediate with substrate; via pyruvic acid) is an active-site residue. At S112 the chain carries Pyruvic acid (Ser); by autocatalysis. Catalysis depends on H117, which acts as the Proton acceptor; for processing activity. C140 acts as the Proton donor; for catalytic activity in catalysis.

Belongs to the prokaryotic AdoMetDC family. Type 2 subfamily. Heterooctamer of four alpha and four beta chains arranged as a tetramer of alpha/beta heterodimers. Pyruvate serves as cofactor. Post-translationally, is synthesized initially as an inactive proenzyme. Formation of the active enzyme involves a self-maturation process in which the active site pyruvoyl group is generated from an internal serine residue via an autocatalytic post-translational modification. Two non-identical subunits are generated from the proenzyme in this reaction, and the pyruvate is formed at the N-terminus of the alpha chain, which is derived from the carboxyl end of the proenzyme. The post-translation cleavage follows an unusual pathway, termed non-hydrolytic serinolysis, in which the side chain hydroxyl group of the serine supplies its oxygen atom to form the C-terminus of the beta chain, while the remainder of the serine residue undergoes an oxidative deamination to produce ammonia and the pyruvoyl group blocking the N-terminus of the alpha chain.

It carries out the reaction S-adenosyl-L-methionine + H(+) = S-adenosyl 3-(methylsulfanyl)propylamine + CO2. It functions in the pathway amine and polyamine biosynthesis; S-adenosylmethioninamine biosynthesis; S-adenosylmethioninamine from S-adenosyl-L-methionine: step 1/1. Functionally, catalyzes the decarboxylation of S-adenosylmethionine to S-adenosylmethioninamine (dcAdoMet), the propylamine donor required for the synthesis of the polyamines spermine and spermidine from the diamine putrescine. The polypeptide is S-adenosylmethionine decarboxylase proenzyme (Cronobacter sakazakii (strain ATCC BAA-894) (Enterobacter sakazakii)).